Reading from the N-terminus, the 86-residue chain is Small ribosomal subunit protein bS20 (86 aa).

The protein belongs to the bacterial ribosomal protein bS20 family.

Binds directly to 16S ribosomal RNA. This chain is Small ribosomal subunit protein bS20, found in Pelagibacter ubique (strain HTCC1062).